Here is a 185-residue protein sequence, read N- to C-terminus: TATA-box-binding protein (185 aa).

2 repeat units span residues 8-84 and 99-175.

Belongs to the TBP family.

Functionally, general factor that plays a role in the activation of archaeal genes transcribed by RNA polymerase. Binds specifically to the TATA box promoter element which lies close to the position of transcription initiation. This is TATA-box-binding protein from Thermococcus sibiricus (strain DSM 12597 / MM 739).